Reading from the N-terminus, the 184-residue chain is NADH-quinone oxidoreductase subunit B (184 aa).

Residues C37, C38, C103, and C132 each coordinate [4Fe-4S] cluster.

Belongs to the complex I 20 kDa subunit family. As to quaternary structure, NDH-1 is composed of 14 different subunits. Subunits NuoB, C, D, E, F, and G constitute the peripheral sector of the complex. The cofactor is [4Fe-4S] cluster.

It is found in the cell membrane. The catalysed reaction is a quinone + NADH + 5 H(+)(in) = a quinol + NAD(+) + 4 H(+)(out). In terms of biological role, NDH-1 shuttles electrons from NADH, via FMN and iron-sulfur (Fe-S) centers, to quinones in the respiratory chain. The immediate electron acceptor for the enzyme in this species is believed to be a menaquinone. Couples the redox reaction to proton translocation (for every two electrons transferred, four hydrogen ions are translocated across the cytoplasmic membrane), and thus conserves the redox energy in a proton gradient. The polypeptide is NADH-quinone oxidoreductase subunit B (Mycobacterium sp. (strain JLS)).